The primary structure comprises 309 residues: HPr kinase/phosphorylase (309 aa).

Active-site residues include H138 and K159. 153–160 is an ATP binding site; it reads GQSGVGKS. S160 contacts Mg(2+). Residue D177 is the Proton acceptor; for phosphorylation activity. Proton donor; for dephosphorylation activity of the active site. An important for the catalytic mechanism of both phosphorylation and dephosphorylation region spans residues 201 to 210; the sequence is LEIRGLGIIN. Mg(2+) is bound at residue E202. R243 is an active-site residue. Positions 264 to 269 are important for the catalytic mechanism of dephosphorylation; the sequence is PVRPGR.

This sequence belongs to the HPrK/P family. In terms of assembly, homohexamer. It depends on Mg(2+) as a cofactor.

It carries out the reaction [HPr protein]-L-serine + ATP = [HPr protein]-O-phospho-L-serine + ADP + H(+). The catalysed reaction is [HPr protein]-O-phospho-L-serine + phosphate + H(+) = [HPr protein]-L-serine + diphosphate. Its function is as follows. Catalyzes the ATP- as well as the pyrophosphate-dependent phosphorylation of a specific serine residue in HPr, a phosphocarrier protein of the phosphoenolpyruvate-dependent sugar phosphotransferase system (PTS). HprK/P also catalyzes the pyrophosphate-producing, inorganic phosphate-dependent dephosphorylation (phosphorolysis) of seryl-phosphorylated HPr (P-Ser-HPr). The two antagonistic activities of HprK/P are regulated by several intracellular metabolites, which change their concentration in response to the absence or presence of rapidly metabolisable carbon sources (glucose, fructose, etc.) in the growth medium. Also phosphorylates/dephosphorylates the HPr-like catabolite repression protein crh on a specific serine residue. Therefore, by controlling the phosphorylation state of HPr and crh, HPrK/P is a sensor enzyme that plays a major role in the regulation of carbon metabolism and sugar transport: it mediates carbon catabolite repression (CCR), and regulates PTS-catalyzed carbohydrate uptake and inducer exclusion. The protein is HPr kinase/phosphorylase of Bacillus anthracis (strain A0248).